A 189-amino-acid chain; its full sequence is Movement protein (189 aa).

This sequence belongs to the tombusvirus/aureusvirus movement protein p22 family.

The protein resides in the host membrane. Transports viral genome to neighboring plant cells directly through plasmosdesmata, without any budding. The movement protein allows efficient cell to cell propagation, by bypassing the host cell wall barrier. This chain is Movement protein, found in Artichoke mottled crinkle virus (AMCV).